Reading from the N-terminus, the 265-residue chain is 3-methyl-2-oxobutanoate hydroxymethyltransferase (265 aa).

Residues D45 and D84 each contribute to the Mg(2+) site. 3-methyl-2-oxobutanoate-binding positions include 45–46, D84, and K112; that span reads DS. E114 serves as a coordination point for Mg(2+). E181 serves as the catalytic Proton acceptor.

The protein belongs to the PanB family. In terms of assembly, homodecamer; pentamer of dimers. It depends on Mg(2+) as a cofactor.

The protein localises to the cytoplasm. It carries out the reaction 3-methyl-2-oxobutanoate + (6R)-5,10-methylene-5,6,7,8-tetrahydrofolate + H2O = 2-dehydropantoate + (6S)-5,6,7,8-tetrahydrofolate. Its pathway is cofactor biosynthesis; (R)-pantothenate biosynthesis; (R)-pantoate from 3-methyl-2-oxobutanoate: step 1/2. Functionally, catalyzes the reversible reaction in which hydroxymethyl group from 5,10-methylenetetrahydrofolate is transferred onto alpha-ketoisovalerate to form ketopantoate. This Pseudoalteromonas atlantica (strain T6c / ATCC BAA-1087) protein is 3-methyl-2-oxobutanoate hydroxymethyltransferase.